We begin with the raw amino-acid sequence, 146 residues long: Snaclec coagulation factor IX/factor X-binding protein subunit B2 (146 aa).

The N-terminal stretch at 1–23 (MGRLIFVSFGLLVVFLSLSGTAA) is a signal peptide. 3 cysteine pairs are disulfide-bonded: C25–C36, C53–C142, and C119–C134. The C-type lectin domain maps to 32–143 (YEGHCYKPFN…CRMMANFVCE (112 aa)).

It belongs to the snaclec family. Heterodimer of subunits A and B2; disulfide-linked. In terms of tissue distribution, expressed by the venom gland.

It localises to the secreted. Anticoagulant protein which binds to the gamma-carboxyglutamic acid-domain regions of factors IX (F9) and factor X (F10) in the presence of calcium with a 1 to 1 stoichiometry. The protein is Snaclec coagulation factor IX/factor X-binding protein subunit B2 of Trimeresurus stejnegeri (Chinese green tree viper).